Reading from the N-terminus, the 141-residue chain is Heavy metal-associated isoprenylated plant protein 29 (141 aa).

The HMA domain occupies 1–59 (MEVPMDCPGCENKVRKALEKMNGVHDVQIDIKQQRVTVTGSAEQKKVLKVARNVTKRDI). Residues C7 and C10 each coordinate a metal cation. C138 bears the Cysteine methyl ester mark. A lipid anchor (S-farnesyl cysteine) is attached at C138. Residues 139 to 141 (SIM) constitute a propeptide, removed in mature form.

It belongs to the HIPP family.

Functionally, heavy-metal-binding protein. In Arabidopsis thaliana (Mouse-ear cress), this protein is Heavy metal-associated isoprenylated plant protein 29.